The following is a 192-amino-acid chain: Ribosome hibernation promotion factor (192 aa).

Residues 95-129 (RVNRKHKTHGEPEAFVAEVQEAPPENVDDVNAEPT) are disordered. Acidic residues predominate over residues 120 to 129 (NVDDVNAEPT).

This sequence belongs to the HPF/YfiA ribosome-associated protein family. Long HPF subfamily. Interacts with 100S ribosomes.

It localises to the cytoplasm. Required for dimerization of active 70S ribosomes into 100S ribosomes in stationary phase; 100S ribosomes are translationally inactive and sometimes present during exponential growth. The protein is Ribosome hibernation promotion factor of Staphylococcus haemolyticus (strain JCSC1435).